Here is a 262-residue protein sequence, read N- to C-terminus: Acyl-[acyl-carrier-protein]--UDP-N-acetylglucosamine O-acyltransferase (262 aa).

It belongs to the transferase hexapeptide repeat family. LpxA subfamily. As to quaternary structure, homotrimer.

It localises to the cytoplasm. It carries out the reaction a (3R)-hydroxyacyl-[ACP] + UDP-N-acetyl-alpha-D-glucosamine = a UDP-3-O-[(3R)-3-hydroxyacyl]-N-acetyl-alpha-D-glucosamine + holo-[ACP]. Its pathway is glycolipid biosynthesis; lipid IV(A) biosynthesis; lipid IV(A) from (3R)-3-hydroxytetradecanoyl-[acyl-carrier-protein] and UDP-N-acetyl-alpha-D-glucosamine: step 1/6. Functionally, involved in the biosynthesis of lipid A, a phosphorylated glycolipid that anchors the lipopolysaccharide to the outer membrane of the cell. The chain is Acyl-[acyl-carrier-protein]--UDP-N-acetylglucosamine O-acyltransferase from Salmonella heidelberg (strain SL476).